A 371-amino-acid chain; its full sequence is MGRLVLLWGAAVFLLGGWMALGQGGAAEGVQIQIIYFNLETVQVTWNASKYSRTNLTFHYRFNGDEAYDQCTNYLLQEGHTSGCLLDAEQRDDILYFSIRNGTHPVFTASRWMVYYLKPSSPKHVRFSWHQDAVTVTCSDLSYGDLLYEVQYRSPFDTEWQSKQENTCNVTIEGLDAEKCYSFWVRVKAMEDVYGPDTYPSDWSEVTCWQRGEIRDACAETPTPPKPKLSKFILISSLAILLMVSLLLLSLWKLWRVKKFLIPSVPDPKSIFPGLFEIHQGNFQEWITDTQNVAHLHKMAGAEQESGPEEPLVVQLAKTEAESPRMLDPQTEEKEASGGSLQLPHQPLQGGDVVTIGGFTFVMNDRSYVAL.

The N-terminal stretch at 1-22 (MGRLVLLWGAAVFLLGGWMALG) is a signal peptide. Topologically, residues 23 to 231 (QGGAAEGVQI…PTPPKPKLSK (209 aa)) are extracellular. 2 N-linked (GlcNAc...) asparagine glycosylation sites follow: Asn47 and Asn55. Cys71 and Cys84 are oxidised to a cystine. N-linked (GlcNAc...) asparagine glycosylation is found at Asn101 and Asn169. In terms of domain architecture, Fibronectin type-III spans 118–211 (KPSSPKHVRF…DWSEVTCWQR (94 aa)). Residues Cys180 and Cys218 are joined by a disulfide bond. Positions 200–204 (PSDWS) match the WSXWS motif motif. Residues 232–252 (FILISSLAILLMVSLLLLSLW) traverse the membrane as a helical segment. Residues 253-371 (KLWRVKKFLI…VMNDRSYVAL (119 aa)) lie on the Cytoplasmic side of the membrane. A Box 1 motif motif is present at residues 261–269 (LIPSVPDPK). Residues 322–336 (ESPRMLDPQTEEKEA) are compositionally biased toward basic and acidic residues. Residues 322–347 (ESPRMLDPQTEEKEASGGSLQLPHQP) form a disordered region.

This sequence belongs to the type I cytokine receptor family. Type 5 subfamily. Heterodimer of CRLF2 and IL7R. As to expression, expressed in heart, skeletal muscle, kidney and adult and fetal liver. Primarily expressed in dendrites and monocytes. Weakly expressed in T-cells.

Its subcellular location is the cell membrane. The protein resides in the secreted. In terms of biological role, receptor for thymic stromal lymphopoietin (TSLP). Forms a functional complex with TSLP and IL7R which is capable of stimulating cell proliferation through activation of STAT3 and STAT5. Also activates JAK2. Implicated in the development of the hematopoietic system. This Homo sapiens (Human) protein is Cytokine receptor-like factor 2 (CRLF2).